Consider the following 241-residue polypeptide: Polycomb group RING finger protein 3 (241 aa).

An RING-type zinc finger spans residues 17 to 56 (CRLCSGYLIDATTVTECLHTFCRSCLVKYLEENNTCPTCR). The interval 115–148 (AKQHLDPRNGETKADDNSNKETAEEKQEEDNDYH) is disordered. The segment covering 117 to 139 (QHLDPRNGETKADDNSNKETAEE) has biased composition (basic and acidic residues). The segment at 131–241 (NSNKETAEEK…LHYRPKMDLL (111 aa)) is interaction with BCORL1.

In terms of assembly, component of a PRC1-like complex that contains PCGF3, RNF2 and RYBP. Interacts with RNF2. Interacts with CBX6, CBX7 and CBX8. Interacts with BCORL1.

The protein resides in the nucleus. It is found in the nucleoplasm. Functionally, component of a Polycomb group (PcG) multiprotein PRC1-like complex, a complex class required to maintain the transcriptionally repressive state of many genes, including Hox genes, throughout development. PcG PRC1 complex acts via chromatin remodeling and modification of histones; it mediates monoubiquitination of histone H2A 'Lys-119', rendering chromatin heritably changed in its expressibility. Within the PRC1-like complex, regulates RNF2 ubiquitin ligase activity. Plays a redundant role with PCGF5 as part of a PRC1-like complex that mediates monoubiquitination of histone H2A 'Lys-119' on the X chromosome and is required for normal silencing of one copy of the X chromosome in XX females. In Mus musculus (Mouse), this protein is Polycomb group RING finger protein 3 (PcgF3).